The chain runs to 199 residues: Recombination protein RecR (199 aa).

The C4-type zinc-finger motif lies at 56 to 71 (CQRCNTFTEGDICERC). In terms of domain architecture, Toprim spans 79 to 174 (ELLCVVETPV…GVTRIARGVP (96 aa)).

The protein belongs to the RecR family.

May play a role in DNA repair. It seems to be involved in an RecBC-independent recombinational process of DNA repair. It may act with RecF and RecO. The chain is Recombination protein RecR from Dechloromonas aromatica (strain RCB).